A 524-amino-acid chain; its full sequence is Cytochrome P450 4F12 (524 aa).

Transmembrane regions (helical) follow at residues 19 to 39 and 87 to 107; these read WLLLLLVVGSWLLARILAWTY and GFTVWLGPIIPFIVLCHPDTI. Residue C468 participates in heme binding.

The protein belongs to the cytochrome P450 family. Requires heme as cofactor. Expressed in small intestine, liver, colon and heart.

It is found in the endoplasmic reticulum membrane. The protein localises to the microsome membrane. It carries out the reaction an organic molecule + reduced [NADPH--hemoprotein reductase] + O2 = an alcohol + oxidized [NADPH--hemoprotein reductase] + H2O + H(+). It catalyses the reaction (5Z,8Z,11Z,14Z)-eicosatetraenoate + reduced [NADPH--hemoprotein reductase] + O2 = 18-hydroxy-(5Z,8Z,11Z,14Z)-eicosatetraenoate + oxidized [NADPH--hemoprotein reductase] + H2O + H(+). The catalysed reaction is (7Z,10Z,13Z,16Z,19Z)-docosapentaenoate + reduced [NADPH--hemoprotein reductase] + O2 = 10,11-epoxy-(7Z,13Z,16Z,19Z)-docosatetraenoate + oxidized [NADPH--hemoprotein reductase] + H2O + H(+). The enzyme catalyses (7Z,10Z,13Z,16Z,19Z)-docosapentaenoate + reduced [NADPH--hemoprotein reductase] + O2 = 13,14-epoxy-(7Z,10Z,16Z,19Z)-docosatetraenoate + oxidized [NADPH--hemoprotein reductase] + H2O + H(+). It carries out the reaction (7Z,10Z,13Z,16Z,19Z)-docosapentaenoate + reduced [NADPH--hemoprotein reductase] + O2 = 16,17-epoxy-(7Z,10Z,13Z,19Z)-docosatetraenoate + oxidized [NADPH--hemoprotein reductase] + H2O + H(+). It catalyses the reaction (7Z,10Z,13Z,16Z,19Z)-docosapentaenoate + reduced [NADPH--hemoprotein reductase] + O2 = 19,20-epoxy-(7Z,10Z,13Z,16Z)-docosatetraenoate + oxidized [NADPH--hemoprotein reductase] + H2O + H(+). The catalysed reaction is (4Z,7Z,10Z,13Z,16Z,19Z)-docosahexaenoate + reduced [NADPH--hemoprotein reductase] + O2 = 10,11-epoxy-(4Z,7Z,13Z,16Z,19Z)-docosapentaenoate + oxidized [NADPH--hemoprotein reductase] + H2O + H(+). The enzyme catalyses (4Z,7Z,10Z,13Z,16Z,19Z)-docosahexaenoate + reduced [NADPH--hemoprotein reductase] + O2 = 13,14-epoxy-(4Z,7Z,10Z,16Z,19Z)-docosapentaenoate + oxidized [NADPH--hemoprotein reductase] + H2O + H(+). It carries out the reaction (4Z,7Z,10Z,13Z,16Z,19Z)-docosahexaenoate + reduced [NADPH--hemoprotein reductase] + O2 = 16,17-epoxy-(4Z,7Z,10Z,13Z,19Z)-docosapentaenoate + oxidized [NADPH--hemoprotein reductase] + H2O + H(+). It catalyses the reaction (4Z,7Z,10Z,13Z,16Z,19Z)-docosahexaenoate + reduced [NADPH--hemoprotein reductase] + O2 = 19,20-epoxy-(4Z,7Z,10Z,13Z,16Z)-docosapentaenoate + oxidized [NADPH--hemoprotein reductase] + H2O + H(+). It participates in lipid metabolism; arachidonate metabolism. In terms of biological role, a cytochrome P450 monooxygenase involved in the metabolism of endogenous polyunsaturated fatty acids (PUFAs). Mechanistically, uses molecular oxygen inserting one oxygen atom into a substrate, and reducing the second into a water molecule, with two electrons provided by NADPH via cytochrome P450 reductase (CPR; NADPH-ferrihemoprotein reductase). Catalyzes the hydroxylation of carbon hydrogen bonds, with preference for omega-2 position. Metabolizes (5Z,8Z,11Z,14Z)-eicosatetraenoic acid (arachidonate) toward 18-hydroxy arachidonate. Catalyzes the epoxidation of double bonds of PUFAs such as docosapentaenoic and docosahexaenoic acids. Has low omega-hydroxylase activity toward leukotriene B4 and arachidonate. Involved in the metabolism of xenobiotics. Catalyzes the hydroxylation of the antihistamine drug ebastine. This chain is Cytochrome P450 4F12, found in Homo sapiens (Human).